A 359-amino-acid chain; its full sequence is Peptide chain release factor 1 (359 aa).

Gln232 is subject to N5-methylglutamine.

This sequence belongs to the prokaryotic/mitochondrial release factor family. Methylated by PrmC. Methylation increases the termination efficiency of RF1.

It is found in the cytoplasm. In terms of biological role, peptide chain release factor 1 directs the termination of translation in response to the peptide chain termination codons UAG and UAA. In Lawsonia intracellularis (strain PHE/MN1-00), this protein is Peptide chain release factor 1.